Consider the following 145-residue polypeptide: Small ribosomal subunit protein uS9 (145 aa).

This sequence belongs to the universal ribosomal protein uS9 family.

The protein resides in the cytoplasm. This is Small ribosomal subunit protein uS9 (RPS16) from Gossypium hirsutum (Upland cotton).